Reading from the N-terminus, the 2227-residue chain is MNMSRQGIFQTVGSGLDHILSLADIEEEQMIQSVDRTAVTGASYFTSVDQSSVHTAEVGSHQVEPLRTSVDKPGSKKTQGEKFFLIHSADWLTTHALFHEVAKLDVVKLLYNEQFAVQGLLRYHTYARFGIEIQVQINPTPFQQGGLICAMVPGDQSYGSIASLTVYPHGLLNCNINNVVRIKVPFIYTRGAYHFKDPQYPVWELTIRVWSELNIGTGTSAYTSLNVLARFTDLELHGLTPLSTQMMRNEFRVSTTENVVNLSNYEDARAKMSFALDQEDWKSDPSQGGGIKITHFTTWTSIPTLAAQFPFNASDSVGQQIKVIPVDPYFFQMTNTNPDQKCITALASICQMFCFWRGDLVFDFQVFPTKYHSGRLLFCFVPGNELIDVSGITLKQATTAPCAVMDITGVQSTLRFRVPWISDTPYRVNRYTKSAHQKGEYTAIGKLIVYCYNRLTSPSNVASHVRVNVYLSAINLECFAPLYHAMDVTTQVGDDSGGFSTTVSTEQNVPDPQVGITTMKDLKGKANRGKMDVSGVQAPVGAITTIEDPVLAKKVPETFPELKPGESRHTSDHMSIYKFMGRSHFLCTFTFNSNNKEYTFPITLSSTSNPPHGLPSTLRWFFNLFQLYRGPLDLTIIITGATDVDGMAWFTPVGLAVDTPWVEKESALSIDYKTALGAVRFNTRRTGNIQIRLPWYSYLYAVSGALDGLGDKTDSTFGLVSIQIANYNHSDEYLSFSCYLSVTEQSEFYFPRAPLNSNAMLSTESMMSRIAAGDLESSVDDPRSEEDKRFESHIECRKPYKELRLEVGKQRLKYAQEELSNEVLPPPRKMKGLFSQAKISLFYTEEHEIMKFSWRGVTADTRALRRFGFSLAAGRSVWTLEMDAGVLTGRLIRLNDEKWTEMKDDKIVSLIEKFTSNKYWSKVNFPHGMLDLEEIAANSKDFPNMSETDLCFLLHWLNPKKINLADRMLGLSGVQEIKEQGVGLIAECRTFLDSIAGTLKSMMFGFHHSVTVEIINTVLCFVKSGILLYVIQQLNQDEHSHIIGLLRVMNYADIGCSVISCGKVFSKMLETVFNWQMDSRMMELRTQSFSNWLRDICSGITIFKNFKDAIYWLYTKLKDFYEVNYGKKKDILNILKDNQQKIEKAIEEADEFCILQIQDVEKFEQYQKGVDLIQKLRTVHSMAQVDPNLMVHLSPLRDCIARVHQKLKNLGSINQAMVTRCEPVVCYLYGKRGGGKSLTSIALATKICKHYGVEPEKNIYTKPVASDYWDGYSGQLVCIIDDIGQNTTDEDWSDFCQLVSGCPMRLNMASLEEKGRHFSSPFIIATSNWSNPSPKTVYVKEAIDRRLHFKVEVKPASFFKNPHNDMLNVNLAKTNDAIKDMSCVDLIMDGHNVSLMDLLSSLVMTVEIRKQNMTEFMELWSQGISDDDNDSAVAEFFQSFPSGEPSNSKLSGFFQSVTNHKWVAVGAAVGILGVLVGGWFVYKHFSRKEEEPIPAEGVYHGVTKPKQVIKLDADPVESQSTLEIAGLVRKNLVQFGVGEKNGCVRWVMNALGVKDDWLLVPSHAYKFEKDYEMMEFYFNRGGTYYSISAGNVVIQSLDVGFQDVVLMKVPTIPKFRDITQHFIKKGDVPRALNRLATLVTTVNGTPMLISEGPLKMEEKATYVHKKNDGTTVDLTVDQAWRGKGEGLPGMCGGALVSSNQSIQNAILGIHVAGGNSILVAKLVTQEMFQNIDKKIESQRIMKVEFTQCSMNVVSKTLFRKSPIYHHIDKTMINFPAAMPFSKAEIDPMAVMLSKYSLPIVEEPEDYKEASIFYQNKIVGKTQLVDDFLDLDMAITGAPGIDAINMDSSPGFPYVQEKLTKRDLIWLDENGLLLGVHPRLAQRILFNTVMMENCSDLDVVFTTCPKDELRPLEKVLESKTRAIDACPLDYSILCRMYWGPAISYFHLNPGFHTGVAIGIDPDRQWDELFKTMIRFGDVGLDLDFSAFDASLSPFMIREAGRIMSELSGTPSHFGTALINTIIYSKHLLYNCCYHVCGSMPSGSPCTALLNSIINNVNLYYVFSKIFGKSPVFFCQALKILCYGDDVLIVFSRDVQIDNLDLIGQKIVDEFKKLGMTATSADKNVPQLKPVSELTFLKRSFNLVEDRIRPAISEKTIWSLIAWQRSNAEFEQNLENAQWFAFMHGYEFYQKFYYFVQSCLEKEMIEYRLKSYDWWRMRFYDQCFICDLS.

Short sequence motifs ((L)YPX(n)L motif) lie at residues Y167–L171 and Y200–L205. Residues M766–Q836 form an involved in P1-2A pentamerization region. The chain crosses the membrane as a helical span at residues T1011–I1031. Residues I1043 to E1070 form a membrane-penetrating ability region. The SF3 helicase domain occupies H1204–M1366. G1230–S1237 contributes to the ATP binding site. Residues W1462 to Y1482 traverse the membrane as a helical segment. Y1499 is modified (O-(5'-phospho-RNA)-tyrosine). The region spanning D1514–F1728 is the Peptidase C3 domain. Residues H1563, D1603, and C1691 each act as for protease 3C activity in the active site. In terms of domain architecture, RdRp catalytic spans D1976 to N2097.

It belongs to the picornaviridae polyprotein family. As to quaternary structure, homodimer. Homomultimer; probably interacts with membranes in a multimeric form. Seems to assemble into amyloid-like fibers. Interacts with host ACBD3. In terms of assembly, homodimer. Monomer. Interacts with protein 3CD. As to quaternary structure, interacts with protein 3AB. Interacts with human MAVS. In terms of assembly, homodimer; disulfide-linked. As to quaternary structure, homopentamer. Homooligomer. Interacts with capsid protein VP2. Interacts with capsid protein VP3. In terms of assembly, interacts with capsid protein VP1. Interacts with capsid protein VP3. As to quaternary structure, interacts with capsid protein VP1. Interacts with capsid protein VP2. Specific enzymatic cleavages by viral protease in vivo yield a variety of precursors and mature proteins. Polyprotein processing intermediates are produced, such as P1-2A which is a functional precursor of the structural proteins, VP0 which is a VP4-VP2 precursor, VP1-2A precursor, 3ABC precursor which is a stable and catalytically active precursor of 3A, 3B and 3C proteins, 3AB and 3CD precursors. The assembly signal 2A is removed from VP1-2A by a host protease, possibly host Cathepsin L. This cleavage occurs over a region of 3 amino-acids probably generating VP1 proteins with heterogeneous C-termini. In terms of processing, during virion maturation, immature virions are rendered infectious following cleavage of VP0 into VP4 and VP2. This maturation seems to be an autocatalytic event triggered by the presence of RNA in the capsid and is followed by a conformational change of the particle. Post-translationally, the assembly signal 2A is removed from VP1-2A by a host protease, possibly host Cathepsin L in naked virions. This cleavage does not occur in enveloped virions. This cleavage occurs over a region of 3 amino-acids probably generating VP1 proteins with heterogeneous C-termini. VPg is uridylylated prior to priming replication into VPg-pUpU. In terms of processing, unlike other picornaviruses, does not seem to be myristoylated.

It localises to the virion. The protein resides in the host endosome. Its subcellular location is the host multivesicular body. The protein localises to the host membrane. It is found in the host mitochondrion outer membrane. It localises to the host cytoplasm. The protein resides in the host cytoplasmic vesicle membrane. It catalyses the reaction RNA(n) + a ribonucleoside 5'-triphosphate = RNA(n+1) + diphosphate. The enzyme catalyses a ribonucleoside 5'-triphosphate + H2O = a ribonucleoside 5'-diphosphate + phosphate + H(+). It carries out the reaction Selective cleavage of Gln-|-Gly bond in the poliovirus polyprotein. In other picornavirus reactions Glu may be substituted for Gln, and Ser or Thr for Gly.. In terms of biological role, capsid proteins VP1, VP2, and VP3 form a closed capsid enclosing the viral positive strand RNA genome. All these proteins contain a beta-sheet structure called beta-barrel jelly roll. Together they form an icosahedral capsid (T=3) composed of 60 copies of each VP1, VP2, and VP3, with a diameter of approximately 300 Angstroms. VP1 is situated at the 12 fivefold axes, whereas VP2 and VP3 are located at the quasi-sixfold axes. The naked capsid interacts with the host receptor HAVCR1 to provide virion attachment to and probably entry into the target cell. Functionally, VP0 precursor is a component of the immature procapsids. Plays a role in the assembly of the 12 pentamers into an icosahedral structure. Has not been detected in mature virions, supposedly owing to its small size. Its function is as follows. Precursor component of immature procapsids that corresponds to an extended form of the structural protein VP1. After maturation, possibly by the host Cathepsin L, the assembly signal 2A is cleaved to give rise to the mature VP1 protein. In terms of biological role, functions as a viroporin. Affects membrane integrity and causes an increase in membrane permeability. Involved in host intracellular membrane rearrangements probably to give rise to the viral factories. Does not disrupt calcium homeostasis or glycoprotein trafficking. Antagonizes the innate immune response of the host by suppressing IFN-beta synthesis, which it achieves by interfering with the RIG-I/IFIH1 pathway. Functionally, affects membrane integrity and causes an increase in membrane permeability. Associates with and induces structural rearrangements of intracellular membranes. Displays RNA-binding activity. Its function is as follows. The precursor 3ABC is targeted to the mitochondrial membrane where protease 3C activity cleaves and inhibits the host antiviral protein MAVS, thereby disrupting activation of IRF3 through the IFIH1/MDA5 pathway. In vivo, the protease activity of 3ABC precursor is more efficient in cleaving the 2BC precursor than that of protein 3C. The 3ABC precursor may therefore play a role in the proteolytic processing of the polyprotein. In terms of biological role, interacts with the 3CD precursor and with RNA structures found at both the 5'- and 3'-termini of the viral genome. Since the 3AB precursor contains the hydrophobic domain 3A, it probably anchors the whole viral replicase complex to intracellular membranes on which viral RNA synthesis occurs. Functionally, may serve as membrane anchor to the 3AB and 3ABC precursors via its hydrophobic domain. May interact with RNA. Acts as a primer for viral RNA replication and remains covalently bound to viral genomic RNA. VPg is uridylylated prior to priming replication into VPg-pUpU. The VPg-pUpU is then used as primer on the genomic RNA poly(A) by the RNA-dependent RNA polymerase to replicate the viral genome. Its function is as follows. Cysteine protease that generates mature viral proteins from the precursor polyprotein. In addition to its proteolytic activity, it binds to viral RNA, and thus influences viral genome replication. RNA and substrate bind cooperatively to the protease. Cleaves IKBKG/NEMO to impair innate immune signaling. Cleaves host PABPC1 which may participate in the switch of viral translation to RNA synthesis. In terms of biological role, interacts with the 3AB precursor and with RNA structures found at both the 5'- and 3'-termini of the viral genome. Disrupts TLR3 signaling by degrading the host adapter protein TICAM1/TRIF. Functionally, RNA-directed RNA polymerase 3D-POL replicates genomic and antigenomic RNA by recognizing replications specific signals. This chain is Genome polyprotein, found in Human hepatitis A virus genotype IB (isolate HM175) (HHAV).